Here is a 355-residue protein sequence, read N- to C-terminus: F-box protein At1g31080 (355 aa).

The F-box domain occupies 4-49 (GANSASIPNDLILEILSRLPAKSTGRFRCVSKLWGSMLCHSYFTEL). Residues 306 to 320 (AGTSRSPPKQSTSTS) are compositionally biased toward polar residues. Residues 306–333 (AGTSRSPPKQSTSTSSREDHEVRTLAHQ) are disordered. The segment covering 321–333 (SREDHEVRTLAHQ) has biased composition (basic and acidic residues).

In Arabidopsis thaliana (Mouse-ear cress), this protein is F-box protein At1g31080.